Reading from the N-terminus, the 810-residue chain is Phenylalanine--tRNA ligase beta subunit (810 aa).

One can recognise a tRNA-binding domain in the interval 39 to 154 (APPTEKIVVG…EGTPVGQDIR (116 aa)). A B5 domain is found at 405-480 (PQRAPVSMRA…RIYGFEKIPA (76 aa)). Aspartate 458, aspartate 464, glutamate 467, and glutamate 468 together coordinate Mg(2+). The FDX-ACB domain occupies 707–809 (SKFPPVRRDI…MARVYGARLR (103 aa)).

It belongs to the phenylalanyl-tRNA synthetase beta subunit family. Type 1 subfamily. Tetramer of two alpha and two beta subunits. It depends on Mg(2+) as a cofactor.

It is found in the cytoplasm. It catalyses the reaction tRNA(Phe) + L-phenylalanine + ATP = L-phenylalanyl-tRNA(Phe) + AMP + diphosphate + H(+). The sequence is that of Phenylalanine--tRNA ligase beta subunit from Burkholderia pseudomallei (strain 1710b).